Reading from the N-terminus, the 465-residue chain is Lactaldehyde dehydrogenase (465 aa).

Residue 220–225 (GSVEVG) participates in NAD(+) binding. Catalysis depends on residues glutamate 240 and cysteine 274.

It belongs to the aldehyde dehydrogenase family. Homotetramer.

It carries out the reaction (S)-lactaldehyde + NAD(+) + H2O = (S)-lactate + NADH + 2 H(+). The protein operates within cofactor biosynthesis; coenzyme F420 biosynthesis. In terms of biological role, involved in F420 biosynthesis through the oxidation of lactaldehyde to lactate. This Methanococcus maripaludis (strain C5 / ATCC BAA-1333) protein is Lactaldehyde dehydrogenase.